Consider the following 660-residue polypeptide: Bifunctional polymyxin resistance protein ArnA (660 aa).

Residues Met1–Leu304 are formyltransferase ArnAFT. Residue His86–Ile88 participates in (6R)-10-formyltetrahydrofolate binding. The active-site Proton donor; for formyltransferase activity is His104. (6R)-10-formyltetrahydrofolate contacts are provided by residues Arg114 and Val136–Asp140. Residues Arg314–Ser660 are dehydrogenase ArnADH. NAD(+) is bound by residues Asp347 and Asp368–Ile369. UDP-alpha-D-glucuronate-binding positions include Ala393, Tyr398, and Thr432–Ser433. Glu434 (proton acceptor; for decarboxylase activity) is an active-site residue. UDP-alpha-D-glucuronate contacts are provided by residues Arg460, Asn492, Lys526–Arg535, and Tyr613. The Proton donor; for decarboxylase activity role is filled by Arg619.

The protein in the N-terminal section; belongs to the Fmt family. UDP-L-Ara4N formyltransferase subfamily. It in the C-terminal section; belongs to the NAD(P)-dependent epimerase/dehydratase family. UDP-glucuronic acid decarboxylase subfamily. In terms of assembly, homohexamer, formed by a dimer of trimers.

It catalyses the reaction UDP-alpha-D-glucuronate + NAD(+) = UDP-beta-L-threo-pentopyranos-4-ulose + CO2 + NADH. The enzyme catalyses UDP-4-amino-4-deoxy-beta-L-arabinose + (6R)-10-formyltetrahydrofolate = UDP-4-deoxy-4-formamido-beta-L-arabinose + (6S)-5,6,7,8-tetrahydrofolate + H(+). It participates in nucleotide-sugar biosynthesis; UDP-4-deoxy-4-formamido-beta-L-arabinose biosynthesis; UDP-4-deoxy-4-formamido-beta-L-arabinose from UDP-alpha-D-glucuronate: step 1/3. It functions in the pathway nucleotide-sugar biosynthesis; UDP-4-deoxy-4-formamido-beta-L-arabinose biosynthesis; UDP-4-deoxy-4-formamido-beta-L-arabinose from UDP-alpha-D-glucuronate: step 3/3. The protein operates within bacterial outer membrane biogenesis; lipopolysaccharide biosynthesis. Functionally, bifunctional enzyme that catalyzes the oxidative decarboxylation of UDP-glucuronic acid (UDP-GlcUA) to UDP-4-keto-arabinose (UDP-Ara4O) and the addition of a formyl group to UDP-4-amino-4-deoxy-L-arabinose (UDP-L-Ara4N) to form UDP-L-4-formamido-arabinose (UDP-L-Ara4FN). The modified arabinose is attached to lipid A and is required for resistance to polymyxin and cationic antimicrobial peptides. The polypeptide is Bifunctional polymyxin resistance protein ArnA (Escherichia coli O9:H4 (strain HS)).